Here is a 316-residue protein sequence, read N- to C-terminus: Methionyl-tRNA formyltransferase (316 aa).

112–115 (SLLP) is a binding site for (6S)-5,6,7,8-tetrahydrofolate.

The protein belongs to the Fmt family.

The catalysed reaction is L-methionyl-tRNA(fMet) + (6R)-10-formyltetrahydrofolate = N-formyl-L-methionyl-tRNA(fMet) + (6S)-5,6,7,8-tetrahydrofolate + H(+). Attaches a formyl group to the free amino group of methionyl-tRNA(fMet). The formyl group appears to play a dual role in the initiator identity of N-formylmethionyl-tRNA by promoting its recognition by IF2 and preventing the misappropriation of this tRNA by the elongation apparatus. The protein is Methionyl-tRNA formyltransferase of Actinobacillus pleuropneumoniae serotype 7 (strain AP76).